The sequence spans 498 residues: Pyridine nucleotide-disulfide oxidoreductase domain-containing protein 1 (498 aa).

An N-acetylmethionine modification is found at methionine 1.

It belongs to the class-I pyridine nucleotide-disulfide oxidoreductase family. PYROXD1 subfamily. The cofactor is FAD.

It is found in the nucleus. The protein resides in the cytoplasm. It localises to the myofibril. The protein localises to the sarcomere. Its function is as follows. Probable FAD-dependent oxidoreductase; involved in the cellular oxidative stress response. Required for normal sarcomere structure and muscle fiber integrity. The chain is Pyridine nucleotide-disulfide oxidoreductase domain-containing protein 1 (Pyroxd1) from Rattus norvegicus (Rat).